Here is a 133-residue protein sequence, read N- to C-terminus: C-C motif chemokine 21b (133 aa).

Residues 1–23 form the signal peptide; it reads MAQMMTLSLLSLVLALCIPWTQG. 3 disulfide bridges follow: C31–C57, C32–C75, and C103–C122. Positions 87–133 are disordered; that stretch reads MRRLDQPPAPGKQSPGCRKNRGTSKSGKKGKGSKGCKRTEQTQPSRG. Positions 98–133 are C-terminal basic extension; that stretch reads KQSPGCRKNRGTSKSGKKGKGSKGCKRTEQTQPSRG. Residues 104-122 show a composition bias toward basic residues; the sequence is RKNRGTSKSGKKGKGSKGC.

Belongs to the intercrine beta (chemokine CC) family. As to quaternary structure, binds to CCR7 and to CXCR3. Interacts with PDPN; relocalizes PDPN to the basolateral membrane. Interacts with GPR174. Expressed strongly in lung, spleen, thymus, peripheral and mesentric lymph nodes. Also expressed in the testis, kidney, liver, and heart.

Its subcellular location is the secreted. Inhibits hemopoiesis and stimulates chemotaxis. Chemotactic in vitro for thymocytes and activated T-cells, but not for B-cells, macrophages, or neutrophils. Potent mesangial cell chemoattractant. Shows preferential activity towards naive T-cells. May play a role in mediating homing of lymphocytes to secondary lymphoid organs. The protein is C-C motif chemokine 21b (Ccl21b) of Mus musculus (Mouse).